Consider the following 155-residue polypeptide: Small ribosomal subunit protein uS7 (155 aa).

Belongs to the universal ribosomal protein uS7 family. Part of the 30S ribosomal subunit. Contacts proteins S9 and S11.

Functionally, one of the primary rRNA binding proteins, it binds directly to 16S rRNA where it nucleates assembly of the head domain of the 30S subunit. Is located at the subunit interface close to the decoding center, probably blocks exit of the E-site tRNA. This chain is Small ribosomal subunit protein uS7, found in Thermotoga neapolitana (strain ATCC 49049 / DSM 4359 / NBRC 107923 / NS-E).